Here is a 597-residue protein sequence, read N- to C-terminus: Hydrogenase-1 large chain (597 aa).

Residues C76, C79, C576, and C579 each coordinate Ni(2+).

Belongs to the [NiFe]/[NiFeSe] hydrogenase large subunit family. In terms of assembly, heterodimer of a large and a small subunit. It depends on Ni(2+) as a cofactor.

It is found in the cell membrane. It carries out the reaction H2 + A = AH2. Its function is as follows. This is one of three E.coli hydrogenases synthesized in response to different physiological conditions. HYD1 is believed to have a role in hydrogen cycling during fermentative growth. In Escherichia coli (strain K12), this protein is Hydrogenase-1 large chain (hyaB).